A 150-amino-acid chain; its full sequence is Flagellar assembly factor FliW (150 aa).

This sequence belongs to the FliW family. As to quaternary structure, interacts with translational regulator CsrA and flagellin(s).

It localises to the cytoplasm. Acts as an anti-CsrA protein, binds CsrA and prevents it from repressing translation of its target genes, one of which is flagellin. Binds to flagellin and participates in the assembly of the flagellum. The sequence is that of Flagellar assembly factor FliW from Leptospira borgpetersenii serovar Hardjo-bovis (strain L550).